Consider the following 242-residue polypeptide: Probable derlin-1 homolog (242 aa).

The Cytoplasmic segment spans residues 1-18 (MDGVKEWFNSIPPVSRYM). The chain crosses the membrane as a helical span at residues 19–39 (FAIFLGIPVLAAMHLISFNYL). Residues 40 to 98 (YLDFTFTFKHFHLWRLITAPCIISSLGPMFLFNLIFFYQYTTRLESLNYAGKSDDYLFC) are Lumenal-facing. The helical transmembrane segment at 99–119 (IIFISICNIIFGLIFEYYFLG) threads the bilayer. The Cytoplasmic portion of the chain corresponds to 120 to 140 (TMTIMSLIYIYSRMNPTGTSN). A helical membrane pass occupies residues 141-161 (FYGFFSFKTIYLPWVFLVAHF). Residues 162-167 (LQTGHP) are Lumenal-facing. The chain crosses the membrane as a helical span at residues 168–188 (PYSDFLAIVSGHIFFYLTDIY). Over 189–242 (PRANGVPALIKTPKFITNIFNKGDRNPNNVRRDPRTGRPIQEGGYNWGQGHALG) the chain is Cytoplasmic. The span at 214 to 224 (NPNNVRRDPRT) shows a compositional bias: basic and acidic residues. A disordered region spans residues 214–242 (NPNNVRRDPRTGRPIQEGGYNWGQGHALG). The segment covering 233 to 242 (YNWGQGHALG) has biased composition (gly residues).

This sequence belongs to the derlin family.

It localises to the endoplasmic reticulum membrane. May be involved in the degradation process of specific misfolded endoplasmic reticulum (ER) luminal proteins. May also involved in endoplasmic reticulum stress-induced pre-emptive quality control, a mechanism that selectively attenuates the translocation of newly synthesized proteins into the endoplasmic reticulum and reroutes them to the cytosol for proteasomal degradation. In Dictyostelium discoideum (Social amoeba), this protein is Probable derlin-1 homolog.